The chain runs to 258 residues: Global transcriptional regulator CodY (258 aa).

Residues 1–156 are GAF domain; the sequence is MSSLLTKTRM…SATIVGMEML (156 aa). Positions 204–223 form a DNA-binding region, H-T-H motif; that stretch reads ASKIADKVGITRSVIVNALR.

It belongs to the CodY family.

The protein resides in the cytoplasm. DNA-binding global transcriptional regulator which is involved in the adaptive response to starvation and acts by directly or indirectly controlling the expression of numerous genes in response to nutrient availability. During rapid exponential growth, CodY is highly active and represses genes whose products allow adaptation to nutrient depletion. The chain is Global transcriptional regulator CodY from Clostridium beijerinckii (strain ATCC 51743 / NCIMB 8052) (Clostridium acetobutylicum).